We begin with the raw amino-acid sequence, 182 residues long: Large ribosomal subunit protein uL10 (182 aa).

Belongs to the universal ribosomal protein uL10 family. Part of the ribosomal stalk of the 50S ribosomal subunit. The N-terminus interacts with L11 and the large rRNA to form the base of the stalk. The C-terminus forms an elongated spine to which L12 dimers bind in a sequential fashion forming a multimeric L10(L12)X complex.

Forms part of the ribosomal stalk, playing a central role in the interaction of the ribosome with GTP-bound translation factors. The sequence is that of Large ribosomal subunit protein uL10 from Leptothrix cholodnii (strain ATCC 51168 / LMG 8142 / SP-6) (Leptothrix discophora (strain SP-6)).